Reading from the N-terminus, the 130-residue chain is Small ribosomal subunit protein uS11 (130 aa).

This sequence belongs to the universal ribosomal protein uS11 family. In terms of assembly, part of the 30S ribosomal subunit. Interacts with proteins S7 and S18. Binds to IF-3.

Functionally, located on the platform of the 30S subunit, it bridges several disparate RNA helices of the 16S rRNA. Forms part of the Shine-Dalgarno cleft in the 70S ribosome. The polypeptide is Small ribosomal subunit protein uS11 (Thermosynechococcus vestitus (strain NIES-2133 / IAM M-273 / BP-1)).